The chain runs to 85 residues: COMM domain-containing protein 6 (85 aa).

Met1 carries the post-translational modification N-acetylmethionine. The region spanning 18–85 is the COMM domain; sequence QLIDFEWKLG…KEIAAIIETV (68 aa).

The protein belongs to the COMM domain-containing protein 6 family. In terms of assembly, component of the commander complex consisting of the CCC subcomplex and the retriever subcomplex. Component of the CCC (COMMD/CCDC22/CCDC93) subcomplex consisting of COMMD1, COMMD2, COMMD3, COMMD4, COMMD5, COMMD6, COMMD7, COMMD8, COMMD9, COMMD10, CCDC22 and CCDC93; within the complex forms a heterodimer with COMMD1. May form a homodimer with isoform 1. Interacts with RELA, RELB, NFKB1/p105. Does not interact with NFKBIB. Interacts with CCDC22, CCDC93, SCNN1B, CUL4A.

It localises to the nucleus. The protein resides in the cytoplasm. Scaffold protein in the commander complex that is essential for endosomal recycling of transmembrane cargos; the commander complex is composed of the CCC subcomplex and the retriever subcomplex. May modulate activity of cullin-RING E3 ubiquitin ligase (CRL) complexes. Down-regulates activation of NF-kappa-B. Inhibits TNF-induced NFKB1 activation. This Bos taurus (Bovine) protein is COMM domain-containing protein 6 (COMMD6).